Consider the following 131-residue polypeptide: Aspartate 1-decarboxylase (131 aa).

Residue serine 25 is the Schiff-base intermediate with substrate; via pyruvic acid of the active site. Serine 25 carries the post-translational modification Pyruvic acid (Ser). Threonine 57 contributes to the substrate binding site. The active-site Proton donor is the tyrosine 58. 73-75 lines the substrate pocket; it reads GAA.

The protein belongs to the PanD family. In terms of assembly, heterooctamer of four alpha and four beta subunits. The cofactor is pyruvate. Is synthesized initially as an inactive proenzyme, which is activated by self-cleavage at a specific serine bond to produce a beta-subunit with a hydroxyl group at its C-terminus and an alpha-subunit with a pyruvoyl group at its N-terminus.

It is found in the cytoplasm. It carries out the reaction L-aspartate + H(+) = beta-alanine + CO2. Its pathway is cofactor biosynthesis; (R)-pantothenate biosynthesis; beta-alanine from L-aspartate: step 1/1. Catalyzes the pyruvoyl-dependent decarboxylation of aspartate to produce beta-alanine. In Anaeromyxobacter dehalogenans (strain 2CP-C), this protein is Aspartate 1-decarboxylase.